The following is a 96-amino-acid chain: Co-chaperonin GroES 1 (96 aa).

The protein belongs to the GroES chaperonin family. As to quaternary structure, heptamer of 7 subunits arranged in a ring. Interacts with the chaperonin GroEL.

Its subcellular location is the cytoplasm. Functionally, together with the chaperonin GroEL, plays an essential role in assisting protein folding. The GroEL-GroES system forms a nano-cage that allows encapsulation of the non-native substrate proteins and provides a physical environment optimized to promote and accelerate protein folding. GroES binds to the apical surface of the GroEL ring, thereby capping the opening of the GroEL channel. The polypeptide is Co-chaperonin GroES 1 (Vibrio cholerae serotype O1 (strain ATCC 39315 / El Tor Inaba N16961)).